A 111-amino-acid chain; its full sequence is Prothymosin alpha-A (111 aa).

The segment at 1–111 is disordered; that stretch reads MSDTAVDASV…IKKQKTDEDD (111 aa). Over residues 9-42 the composition is skewed to basic and acidic residues; it reads SVEKTTKDLKAKEKEVVEEAENGKDKPTNGKAEN. Composition is skewed to acidic residues over residues 43–81 and 90–100; these read EENG…DEVE and EDDEDDDDDDV. Basic and acidic residues predominate over residues 101–111; it reads EIKKQKTDEDD.

This sequence belongs to the pro/parathymosin family.

It is found in the nucleus. The sequence is that of Prothymosin alpha-A (ptma-a) from Xenopus laevis (African clawed frog).